A 323-amino-acid chain; its full sequence is Ankyrin repeat and SOCS box protein 11 (323 aa).

7 ANK repeats span residues 64-93, 97-126, 130-159, 162-191, 195-224, 227-256, and 260-289; these read ADRSPLHEAAAQGRLLALKTLIAQGINVNL, NRVSSLHEACLGGHVACAKALLENGAHVNA, HGATPLFNACCSGSAACVNVLLEFGAKAQL, YLASPIHEAVKRGHRECMEILLTKDVNIEQ, QLGTPLYVACTYQRVDCVKKLLELGASVDH, WLDTPLHAAVRQSSVEVINLLTVYGANLNL, and QGKSALDLAVPKSSVRQALLLHEGPPALSQ. The region spanning 273-323 is the SOCS box domain; the sequence is SVRQALLLHEGPPALSQLCRLCVRKCLGRTCHHAIYALGLPESLEKFLLYQ.

It belongs to the ankyrin SOCS box (ASB) family. As to quaternary structure, substrate-recognition component of the ECS(ASB11) complex, composed of ASB11, CUL5, ELOB, ELOC and RNF7/RBX2.

It is found in the endoplasmic reticulum. It participates in protein modification; protein ubiquitination. Substrate-recognition component of a cullin-5-RING E3 ubiquitin-protein ligase complex (ECS complex, also named CRL5 complex), which mediates the ubiquitination and subsequent proteasomal degradation of target proteins, such as BIK, DIRAS2 and RPN1. The ECS(ASB11) complex acts as a regulator of the endoplasmic reticulum unfolded protein response by mediating ubiquitination and degradation of BIK. The sequence is that of Ankyrin repeat and SOCS box protein 11 (Asb11) from Mus musculus (Mouse).